The following is a 150-amino-acid chain: Nucleoside diphosphate kinase (150 aa).

Residues lysine 9, phenylalanine 57, arginine 85, threonine 91, arginine 102, and asparagine 112 each contribute to the ATP site. The active-site Pros-phosphohistidine intermediate is the histidine 115.

This sequence belongs to the NDK family. Homotetramer. It depends on Mg(2+) as a cofactor.

The protein resides in the cytoplasm. It carries out the reaction a 2'-deoxyribonucleoside 5'-diphosphate + ATP = a 2'-deoxyribonucleoside 5'-triphosphate + ADP. The catalysed reaction is a ribonucleoside 5'-diphosphate + ATP = a ribonucleoside 5'-triphosphate + ADP. Functionally, major role in the synthesis of nucleoside triphosphates other than ATP. The ATP gamma phosphate is transferred to the NDP beta phosphate via a ping-pong mechanism, using a phosphorylated active-site intermediate. This chain is Nucleoside diphosphate kinase, found in Thermosynechococcus vestitus (strain NIES-2133 / IAM M-273 / BP-1).